Consider the following 148-residue polypeptide: Large ribosomal subunit protein bL9 (148 aa).

This sequence belongs to the bacterial ribosomal protein bL9 family.

In terms of biological role, binds to the 23S rRNA. This Macrococcus caseolyticus (strain JCSC5402) (Macrococcoides caseolyticum) protein is Large ribosomal subunit protein bL9.